The sequence spans 1274 residues: Regulator of telomere elongation helicase 1 (1274 aa).

Positions 7–296 (NGVTVDFPFQ…ARVAQHGELQ (290 aa)) constitute a Helicase ATP-binding domain. 42–49 (SPTGTGKT) serves as a coordination point for ATP. [4Fe-4S] cluster contacts are provided by Cys-145, Cys-163, Cys-172, and Cys-207. A Nuclear localization signal motif is present at residues 151–167 (KKQESNHMQISLCRKKV). The DEAH box signature appears at 250–253 (DEAH). Positions 871–877 (QRGGKKK) match the Nuclear localization signal motif. Disordered stretches follow at residues 982–1002 (NSLP…RREL), 1014–1038 (RQLD…SKGD), and 1143–1198 (ELPC…DDTI). Residues 1186–1196 (QRPDQSARSDD) are compositionally biased toward basic and acidic residues.

It belongs to the helicase family. RAD3/XPD subfamily. As to quaternary structure, interacts with TERF1. Interacts (via PIP-box) with PCNA; the interaction is direct and essential for suppressing telomere fragility. Interacts with MMS19; the interaction mediates the association of RTEL1 with the cytosolic iron-sulfur protein assembly (CIA) complex.

It localises to the nucleus. It catalyses the reaction ATP + H2O = ADP + phosphate + H(+). Functionally, a probable ATP-dependent DNA helicase implicated in telomere-length regulation, DNA repair and the maintenance of genomic stability. Acts as an anti-recombinase to counteract toxic recombination and limit crossover during meiosis. Regulates meiotic recombination and crossover homeostasis by physically dissociating strand invasion events and thereby promotes noncrossover repair by meiotic synthesis dependent strand annealing (SDSA) as well as disassembly of D loop recombination intermediates. Also disassembles T loops and prevents telomere fragility by counteracting telomeric G4-DNA structures, which together ensure the dynamics and stability of the telomere. The polypeptide is Regulator of telomere elongation helicase 1 (Rtel1) (Rattus norvegicus (Rat)).